Reading from the N-terminus, the 252-residue chain is Probable transcriptional regulatory protein DSY2470 (252 aa).

It belongs to the TACO1 family.

Its subcellular location is the cytoplasm. In Desulfitobacterium hafniense (strain Y51), this protein is Probable transcriptional regulatory protein DSY2470.